Reading from the N-terminus, the 266-residue chain is Glutamate racemase (266 aa).

Substrate-binding positions include aspartate 9–serine 10 and tyrosine 41–glycine 42. The Proton donor/acceptor role is filled by cysteine 72. Asparagine 73 to threonine 74 lines the substrate pocket. Cysteine 184 (proton donor/acceptor) is an active-site residue. Threonine 185–histidine 186 is a binding site for substrate.

Belongs to the aspartate/glutamate racemases family.

It carries out the reaction L-glutamate = D-glutamate. The protein operates within cell wall biogenesis; peptidoglycan biosynthesis. In terms of biological role, provides the (R)-glutamate required for cell wall biosynthesis. The sequence is that of Glutamate racemase from Staphylococcus haemolyticus.